Here is a 183-residue protein sequence, read N- to C-terminus: Ly6/PLAUR domain-containing protein 6B (183 aa).

The first 39 residues, 1 to 39 (MLYKSSDRPAHKVSMLLLCHALAIAVVQIVIFSESWAFA), serve as a signal peptide directing secretion. Residues 60–151 (FKCFTCENAG…VELPTNHTNA (92 aa)) enclose the UPAR/Ly6 domain. Residues 60–154 (FKCFTCENAG…PTNHTNAVFA (95 aa)) are sufficient for inhibiting alpha-7 nAChR currents. 6 cysteine pairs are disulfide-bonded: C62-C90, C65-C74, C83-C109, C115-C134, C120-C131, and C135-C140. S164 is lipidated: GPI-anchor amidated serine. The propeptide at 165-183 (SAPTLYLPVLAWVFVLPLL) is removed in mature form.

It is found in the cell membrane. Likely acts as a modulator of nicotinic acetylcholine receptors (nAChRs) activity. In vitro acts on nAChRs in a subtype- and stoichiometry-dependent manner. Modulates specifically alpha-3(3):beta-4(2) nAChRs by enhancing the sensitivity to ACh, decreasing ACh-induced maximal current response and increasing the rate of desensitization to ACh; has no effect on alpha-7 homomeric nAChRs; modulates alpha-3(2):alpha-5:beta-4(2) nAChRs in the context of CHRNA5/alpha-5 variant Asn-398 but not its wild-type sequence. However, according to another report in vitro it can weakly inhibits alpha-7 nAChRs. This Homo sapiens (Human) protein is Ly6/PLAUR domain-containing protein 6B (LYPD6B).